A 430-amino-acid chain; its full sequence is GTPase Obg (430 aa).

Residues 1–158 (MFIDKAKIYL…LTVVLELKLI (158 aa)) form the Obg domain. The OBG-type G domain maps to 159–330 (ADVGLVGFPN…LLSYVSKRLK (172 aa)). Residues 165 to 172 (GFPNVGKS), 190 to 194 (FTTLT), 212 to 215 (DIPG), 282 to 285 (NKTD), and 311 to 313 (SAA) each bind GTP. Mg(2+) contacts are provided by S172 and T192. The region spanning 351-430 (KYEETEDKYH…MYSVEFEYFN (80 aa)) is the OCT domain.

It belongs to the TRAFAC class OBG-HflX-like GTPase superfamily. OBG GTPase family. Monomer. It depends on Mg(2+) as a cofactor.

It is found in the cytoplasm. In terms of biological role, an essential GTPase which binds GTP, GDP and possibly (p)ppGpp with moderate affinity, with high nucleotide exchange rates and a fairly low GTP hydrolysis rate. Plays a role in control of the cell cycle, stress response, ribosome biogenesis and in those bacteria that undergo differentiation, in morphogenesis control. This Alkaliphilus oremlandii (strain OhILAs) (Clostridium oremlandii (strain OhILAs)) protein is GTPase Obg.